Consider the following 561-residue polypeptide: MMIAGAEANVEPLVRQSSKPEFGDYQANGAMAAAKKLAMNPREFAQKILDNLDVSDMVDKLEIAGPGFINIFLKPSWLAKQANFALQAVNFGIKTAQPQTILIDYSSPNVAKEMHVGHLRSTIIGDAVVRTLEFLGNNVIRANHVGDWGTQFGMLIAYLEKMENEQASEMQLSDLEAFYRAAKESYDSDQIFAEKARNYVVKLQSGDEYCRTMWKKLVDITMHHNQENYDRLNVTLTEKDVMGESLYNPMLPEIVADLKAKGLAVEDNGAVVVFLDEFKNKDGDPMGVIIQKSDGGFLYTTTDIAAAKYRYETLKVDRALVFSDSRQAQHMQQAWLITRKAGYVPASFSLEHPFFGMMLGKDGKPFKTRSGGTVKLKDLLDEAVERADKLISARSTNLTVAEKSAVVEAVAIGSVKYSDLSKNRTTDYVFDWDNMLTFEGNTAPYMQYAYTRIRSIFARAEIDPDTLTGEMQLTEEKERTLALKLLQFEEALTAVAKEGMPHILCQYLYELAGIFSSFYEACPMLNADEAIKHSRLRLASLTAKTLKQGLDLLGIKTVEKM.

The short motif at 108-118 (PNVAKEMHVGH) is the 'HIGH' region element.

The protein belongs to the class-I aminoacyl-tRNA synthetase family. In terms of assembly, monomer.

The protein localises to the cytoplasm. It catalyses the reaction tRNA(Arg) + L-arginine + ATP = L-arginyl-tRNA(Arg) + AMP + diphosphate. The polypeptide is Arginine--tRNA ligase (Haemophilus ducreyi (strain 35000HP / ATCC 700724)).